We begin with the raw amino-acid sequence, 253 residues long: 5-oxoprolinase subunit A (253 aa).

The protein belongs to the LamB/PxpA family. In terms of assembly, forms a complex composed of PxpA, PxpB and PxpC.

It carries out the reaction 5-oxo-L-proline + ATP + 2 H2O = L-glutamate + ADP + phosphate + H(+). Catalyzes the cleavage of 5-oxoproline to form L-glutamate coupled to the hydrolysis of ATP to ADP and inorganic phosphate. The sequence is that of 5-oxoprolinase subunit A from Bacillus cereus (strain Q1).